A 1038-amino-acid polypeptide reads, in one-letter code: Translation initiation factor IF-2 (1038 aa).

Disordered stretches follow at residues 39-346 and 403-451; these read TISE…KWQE and KPKA…PEKV. The segment covering 103–125 has biased composition (polar residues); that stretch reads RNTTSNAPEASVANNQIASSEAN. A compositionally biased stretch (low complexity) spans 157 to 176; it reads PQKPAAPEAEPEAQSQAPAK. Basic and acidic residues-rich tracts occupy residues 178-197 and 226-243; these read AVEKPEKSAQPRPGKPERQP and PILKRDRPRREDERDQAK. Residues 407–423 show a composition bias toward low complexity; the sequence is ARAATAATAAPISSPTT. Over residues 431-450 the composition is skewed to basic and acidic residues; that stretch reads NNRDQNRRQETEVKRERPEK. The tr-type G domain occupies 532 to 705; sequence RRPPVVTIMG…LLVAEVGELS (174 aa). Residues 541-548 form a G1 region; it reads GHVDHGKT. Residue 541–548 coordinates GTP; the sequence is GHVDHGKT. Positions 566–570 are G2; the sequence is GITQH. Positions 591-594 are G3; sequence DTPG. Residues 591–595 and 645–648 contribute to the GTP site; these read DTPGH and NKID. Positions 645–648 are G4; it reads NKID. The tract at residues 681-683 is G5; sequence SAI.

Belongs to the TRAFAC class translation factor GTPase superfamily. Classic translation factor GTPase family. IF-2 subfamily.

It localises to the cytoplasm. Its function is as follows. One of the essential components for the initiation of protein synthesis. Protects formylmethionyl-tRNA from spontaneous hydrolysis and promotes its binding to the 30S ribosomal subunits. Also involved in the hydrolysis of GTP during the formation of the 70S ribosomal complex. In Trichormus variabilis (strain ATCC 29413 / PCC 7937) (Anabaena variabilis), this protein is Translation initiation factor IF-2.